Consider the following 266-residue polypeptide: NIVFDVENATPETYSSFLTSLREAVKDKKSTCHGMIMATTTTELPKYVLVDLKLGSEKDAKTFTLAIRRGNLYLEGYSDIYNEKCRYRIFEDSESDAQQTVCPGDLTLPGSQNKIPYKKSYQSMESKGGDRTKLGLGQITLESRMNKIYGKDATDQKQFQKNEAEFLLIAVQMITEASRFKYIENKVKDSFDDAIGYKPDPKAISLETSWDKISNAIAKVNTPGNSIVTLPKGLLDENKKPWTTATMDELKNDIMGLLTHVTCKIK.

2 cysteine pairs are disulfide-bonded: C32-C263 and C85-C102. E176 is an active-site residue.

The protein localises to the secreted. It is found in the extracellular space. Its subcellular location is the golgi apparatus. It localises to the vacuole. It carries out the reaction Endohydrolysis of the N-glycosidic bond at one specific adenosine on the 28S rRNA.. Its function is as follows. Nicks pBR322 dsDNA. Has adenine polynucleotide glycosidase activity on herring sperm ssDNA. The protein is Dioicin-2 of Phytolacca dioica (Bella sombra tree).